The sequence spans 466 residues: Putative outer membrane protein NMB0088 (466 aa).

Residues 1 to 24 (MTPSALKKTVLLLGTAFAAASVHA) form the signal peptide.

It belongs to the OmpP1/FadL family.

The protein localises to the cell outer membrane. This is Putative outer membrane protein NMB0088 from Neisseria meningitidis serogroup B (strain ATCC BAA-335 / MC58).